Reading from the N-terminus, the 150-residue chain is Transcriptional repressor NrdR (150 aa).

Residues 3 to 34 fold into a zinc finger; that stretch reads CPFCAHPDSKVVDSRPDKGGAAIRRRRECESC. Residues 49-139 enclose the ATP-cone domain; sequence PLVLKKDGRR…VYRSFKDVNE (91 aa).

This sequence belongs to the NrdR family. Requires Zn(2+) as cofactor.

Negatively regulates transcription of bacterial ribonucleotide reductase nrd genes and operons by binding to NrdR-boxes. The sequence is that of Transcriptional repressor NrdR from Geobacter metallireducens (strain ATCC 53774 / DSM 7210 / GS-15).